A 277-amino-acid chain; its full sequence is MTAQSQNIVETPSRVRAHALGVNAPELAKYQDEPAQMRSGAVGKSGYLKLRFAKREHCSILAEMERRVPSLVQKALYWDEEIPELPCVTMISTSGCILQGDRLATDVHVEAGACAHVTTQSATKVHMMNANYASQIQNFIVEEGGYLEFMSDPLIPHRNSRFITDTTISIHPTATAIYSEVLMSGRKYHHADERFGFDVYSSRVAAQNLAGKELFVEKYVLEPKVESLDAVGVMQTFDAFGNVILLTPKEHHDRILARVPAHFDIKGGDCQRRDAST.

It belongs to the UreD family. In terms of assembly, ureD, UreF and UreG form a complex that acts as a GTP-hydrolysis-dependent molecular chaperone, activating the urease apoprotein by helping to assemble the nickel containing metallocenter of UreC. The UreE protein probably delivers the nickel.

Its subcellular location is the cytoplasm. In terms of biological role, required for maturation of urease via the functional incorporation of the urease nickel metallocenter. In Yersinia pestis (strain Pestoides F), this protein is Urease accessory protein UreD.